Here is a 549-residue protein sequence, read N- to C-terminus: Pleckstrin homology domain-containing family A member 8 (549 aa).

A PH domain is found at Met-1–Ala-93. Disordered stretches follow at residues Asn-180–Ser-245 and Gln-257–Gln-312. Positions Lys-203 to Leu-219 are enriched in basic and acidic residues. Residues Glu-276–Glu-288 are compositionally biased toward acidic residues. The span at Glu-299–Gln-309 shows a compositional bias: polar residues.

Its subcellular location is the cytoplasm. The protein resides in the golgi apparatus. The protein localises to the trans-Golgi network membrane. It is found in the membrane. Functionally, cargo transport protein that is required for apical transport from the trans-Golgi network (TGN) to the plasma membrane. The sequence is that of Pleckstrin homology domain-containing family A member 8 (plekha8) from Danio rerio (Zebrafish).